Reading from the N-terminus, the 145-residue chain is Large ribosomal subunit protein bL9 (145 aa).

The protein belongs to the bacterial ribosomal protein bL9 family.

In terms of biological role, binds to the 23S rRNA. The chain is Large ribosomal subunit protein bL9 from Mesomycoplasma hyopneumoniae (strain J / ATCC 25934 / NCTC 10110) (Mycoplasma hyopneumoniae).